We begin with the raw amino-acid sequence, 274 residues long: NADPH-dependent 7-cyano-7-deazaguanine reductase (274 aa).

Residue 80–82 (VES) participates in substrate binding. 82-83 (SK) is an NADPH binding site. Cysteine 181 functions as the Thioimide intermediate in the catalytic mechanism. The Proton donor role is filled by aspartate 188. 220–221 (HE) serves as a coordination point for substrate. NADPH is bound at residue 249–250 (RG).

Belongs to the GTP cyclohydrolase I family. QueF type 2 subfamily. As to quaternary structure, homodimer.

The protein localises to the cytoplasm. It carries out the reaction 7-aminomethyl-7-carbaguanine + 2 NADP(+) = 7-cyano-7-deazaguanine + 2 NADPH + 3 H(+). It participates in tRNA modification; tRNA-queuosine biosynthesis. In terms of biological role, catalyzes the NADPH-dependent reduction of 7-cyano-7-deazaguanine (preQ0) to 7-aminomethyl-7-deazaguanine (preQ1). This chain is NADPH-dependent 7-cyano-7-deazaguanine reductase, found in Paraburkholderia phytofirmans (strain DSM 17436 / LMG 22146 / PsJN) (Burkholderia phytofirmans).